The sequence spans 150 residues: MIDFDGNMINISRKDVVARKATAVGRIYLRKETITAIKNNQVKKGNVIEISRAVGTMYAKNTFLQIPYCHNIPIEGVDVDFSLGENYVEVTCSTTTSYKTGIEMEAINCVNGALLNIWDMVKYLEKDETGNYPETRIEGVHVIKKTKSQE.

Substrate contacts are provided by residues 68 to 70 (YCH) and 104 to 105 (ME). Asp119 is a catalytic residue.

This sequence belongs to the MoaC family. In terms of assembly, homohexamer; trimer of dimers.

The enzyme catalyses (8S)-3',8-cyclo-7,8-dihydroguanosine 5'-triphosphate = cyclic pyranopterin phosphate + diphosphate. It participates in cofactor biosynthesis; molybdopterin biosynthesis. In terms of biological role, catalyzes the conversion of (8S)-3',8-cyclo-7,8-dihydroguanosine 5'-triphosphate to cyclic pyranopterin monophosphate (cPMP). The protein is Probable cyclic pyranopterin monophosphate synthase of Thermoplasma volcanium (strain ATCC 51530 / DSM 4299 / JCM 9571 / NBRC 15438 / GSS1).